The sequence spans 132 residues: Large ribosomal subunit protein bL12 (132 aa).

The protein belongs to the bacterial ribosomal protein bL12 family. Homodimer. Part of the ribosomal stalk of the 50S ribosomal subunit. Forms a multimeric L10(L12)X complex, where L10 forms an elongated spine to which 2 to 4 L12 dimers bind in a sequential fashion. Binds GTP-bound translation factors.

Forms part of the ribosomal stalk which helps the ribosome interact with GTP-bound translation factors. Is thus essential for accurate translation. This Prochlorococcus marinus (strain MIT 9211) protein is Large ribosomal subunit protein bL12.